The following is a 164-amino-acid chain: NADH-quinone oxidoreductase subunit I 1 (164 aa).

2 consecutive 4Fe-4S ferredoxin-type domains span residues 54–84 (LRRYPNGEERCIACKLCEAICPAQAITIEAG) and 95–124 (VRYDIDMVKCIYCGFCQEACPVDAIVEGPN). Cys-64, Cys-67, Cys-70, Cys-74, Cys-104, Cys-107, Cys-110, and Cys-114 together coordinate [4Fe-4S] cluster.

This sequence belongs to the complex I 23 kDa subunit family. NDH-1 is composed of 14 different subunits. Subunits NuoA, H, J, K, L, M, N constitute the membrane sector of the complex. It depends on [4Fe-4S] cluster as a cofactor.

Its subcellular location is the cell inner membrane. It carries out the reaction a quinone + NADH + 5 H(+)(in) = a quinol + NAD(+) + 4 H(+)(out). NDH-1 shuttles electrons from NADH, via FMN and iron-sulfur (Fe-S) centers, to quinones in the respiratory chain. The immediate electron acceptor for the enzyme in this species is believed to be ubiquinone. Couples the redox reaction to proton translocation (for every two electrons transferred, four hydrogen ions are translocated across the cytoplasmic membrane), and thus conserves the redox energy in a proton gradient. The sequence is that of NADH-quinone oxidoreductase subunit I 1 from Rhizobium meliloti (strain 1021) (Ensifer meliloti).